The following is a 325-amino-acid chain: Helicase VP6-A (325 aa).

2 disordered regions span residues 1–122 and 185–230; these read MLLA…GATG and DLRR…EPAR. Composition is skewed to basic and acidic residues over residues 8-18, 32-54, 61-79, and 92-105; these read VIKRSSEELKQ, EGGK…KDGE, GQKE…DRRI, and LGER…RGDG. Residue Lys106 participates in ATP binding. The segment covering 106 to 122 has biased composition (gly residues); it reads KVGGGGGDADAGVGATG. 2 stretches are compositionally biased toward basic and acidic residues: residues 185–203 and 211–229; these read DLRR…ERGG and HGDA…EEPA.

This sequence belongs to the orbivirus VP6 family. As to quaternary structure, homohexamer.

It is found in the virion. The catalysed reaction is ATP + H2O = ADP + phosphate + H(+). In terms of biological role, ATP dependent RNA helicase essential for RNA packaging and viral transcription. Possesses ss- and dsRNA-binding capacity. This chain is Helicase VP6-A (Segment-9), found in Bluetongue virus 17 (isolate USA) (BTV 17).